The sequence spans 60 residues: Large ribosomal subunit protein bL32 (60 aa).

The protein belongs to the bacterial ribosomal protein bL32 family.

The protein is Large ribosomal subunit protein bL32 of Streptococcus mutans serotype c (strain ATCC 700610 / UA159).